A 201-amino-acid polypeptide reads, in one-letter code: LIM domain-containing protein PLIM2b (201 aa).

2 LIM zinc-binding domains span residues 8 to 68 and 103 to 163; these read DKCT…LFKE and DKCA…LFME. A disordered region spans residues 171–201; it reads KKKSESQEVLPEVVPEEQPAPPPPDENREDN. Low complexity predominate over residues 177-187; that stretch reads QEVLPEVVPEE.

As to quaternary structure, interacts with NEK3.

The chain is LIM domain-containing protein PLIM2b from Oryza sativa subsp. japonica (Rice).